We begin with the raw amino-acid sequence, 241 residues long: Uridylate kinase (241 aa).

15-18 provides a ligand contact to ATP; that stretch reads KLSG. UMP is bound at residue G57. G58 and R62 together coordinate ATP. UMP contacts are provided by residues D77 and 139 to 146; that span reads IGHTLFTT. Positions 166, 167, 172, and 175 each coordinate ATP.

This sequence belongs to the UMP kinase family. As to quaternary structure, homohexamer.

Its subcellular location is the cytoplasm. It catalyses the reaction UMP + ATP = UDP + ADP. It participates in pyrimidine metabolism; CTP biosynthesis via de novo pathway; UDP from UMP (UMPK route): step 1/1. With respect to regulation, inhibited by UTP. In terms of biological role, catalyzes the reversible phosphorylation of UMP to UDP. This chain is Uridylate kinase, found in Wigglesworthia glossinidia brevipalpis.